The sequence spans 108 residues: Transcription factor S (108 aa).

The Zn(2+) site is built by Cys5, Cys8, Cys21, Cys24, Cys69, Cys72, Cys97, and Cys100. The C4-type zinc-finger motif lies at 5-24 (CPKCNNLMLPKDGKLKCAVC). A TFIIS-type zinc finger spans residues 65–105 (TRIECPKCGHNEAYWWLQQTRCADEPETRFYKCKKCGHTWR).

This sequence belongs to the archaeal RpoM/eukaryotic RPA12/RPB9/RPC11 RNA polymerase family.

In terms of biological role, induces RNA cleavage activity in the RNA polymerase. In its presence, the cleavage activity of the RNA polymerase truncates the RNA back to position +15 in a stepwise manner by releasing mainly dinucleotides from the 3'-end of the nascent RNA. The truncated RNAs are able to continue elongation. Involved in transcriptional proofreading and fidelity. Misincorporation of nucleotides during elongation of transcription leads to arrested elongation complexes which are rescued by TFS-promoted removal of a dinucleotide from the 3'-end. TFS is able to induce a cleavage resynthesis cycle in stalled elongation complexes (resulting from the next missing nucleotide or a reduced incorporation rate of a wrong nucleotide) preventing misincorporation and enabling proofreading in a post-incorporation manner. Pausing of elongation complexes is the main determinant of TFS-induced RNA cleavage. The chain is Transcription factor S from Methanocaldococcus jannaschii (strain ATCC 43067 / DSM 2661 / JAL-1 / JCM 10045 / NBRC 100440) (Methanococcus jannaschii).